The primary structure comprises 226 residues: Cytidylate kinase (226 aa).

An ATP-binding site is contributed by 12-20 (GPSGAGKGT).

Belongs to the cytidylate kinase family. Type 1 subfamily.

The protein resides in the cytoplasm. It carries out the reaction CMP + ATP = CDP + ADP. It catalyses the reaction dCMP + ATP = dCDP + ADP. This chain is Cytidylate kinase, found in Vibrio parahaemolyticus serotype O3:K6 (strain RIMD 2210633).